Reading from the N-terminus, the 154-residue chain is Myoglobin (154 aa).

The region spanning 2-148 is the Globin domain; sequence VLSDAEWQLV…FRKDIAAKYK (147 aa). S4 carries the phosphoserine modification. Position 65 (H65) interacts with nitrite. H65 contacts O2. Position 68 is a phosphothreonine (T68). H94 contributes to the heme b binding site.

Belongs to the globin family. In terms of assembly, monomeric.

It localises to the cytoplasm. The protein resides in the sarcoplasm. It catalyses the reaction Fe(III)-heme b-[protein] + nitric oxide + H2O = Fe(II)-heme b-[protein] + nitrite + 2 H(+). The enzyme catalyses H2O2 + AH2 = A + 2 H2O. In terms of biological role, monomeric heme protein which primary function is to store oxygen and facilitate its diffusion within muscle tissues. Reversibly binds oxygen through a pentacoordinated heme iron and enables its timely and efficient release as needed during periods of heightened demand. Depending on the oxidative conditions of tissues and cells, and in addition to its ability to bind oxygen, it also has a nitrite reductase activity whereby it regulates the production of bioactive nitric oxide. Under stress conditions, like hypoxia and anoxia, it also protects cells against reactive oxygen species thanks to its pseudoperoxidase activity. In Eschrichtius robustus (California gray whale), this protein is Myoglobin (MB).